We begin with the raw amino-acid sequence, 247 residues long: Cell division protein ZapD (247 aa).

Belongs to the ZapD family. As to quaternary structure, interacts with FtsZ.

The protein localises to the cytoplasm. Its function is as follows. Cell division factor that enhances FtsZ-ring assembly. Directly interacts with FtsZ and promotes bundling of FtsZ protofilaments, with a reduction in FtsZ GTPase activity. In Klebsiella pneumoniae subsp. pneumoniae (strain ATCC 700721 / MGH 78578), this protein is Cell division protein ZapD.